Here is a 178-residue protein sequence, read N- to C-terminus: Large ribosomal subunit protein bL25 (178 aa).

This sequence belongs to the bacterial ribosomal protein bL25 family. CTC subfamily. Part of the 50S ribosomal subunit; part of the 5S rRNA/L5/L18/L25 subcomplex. Contacts the 5S rRNA. Binds to the 5S rRNA independently of L5 and L18.

This is one of the proteins that binds to the 5S RNA in the ribosome where it forms part of the central protuberance. This is Large ribosomal subunit protein bL25 from Helicobacter pylori (strain P12).